Here is a 144-residue protein sequence, read N- to C-terminus: Transcriptional regulator SlyA (144 aa).

In terms of domain architecture, HTH marR-type spans 2-135 (ESPLGSDLAR…LIKLVAKLEH (134 aa)). Residues 49 to 72 (QIQLAKAIGIEQPSLVRTLDQLED) constitute a DNA-binding region (H-T-H motif).

It belongs to the SlyA family. Homodimer.

Transcription regulator that can specifically activate or repress expression of target genes. Required to activate expression of virulent genes. This chain is Transcriptional regulator SlyA, found in Salmonella choleraesuis (strain SC-B67).